The sequence spans 76 residues: Sec-independent protein translocase protein TatA (76 aa).

Residues 1–21 (MGGISIWQLLIIALIVVLLFG) traverse the membrane as a helical segment. Residues 43–76 (MSSEDEKKAIEDTSAEKTAQTEEKKTESKDKEQA) form a disordered region. The span at 46–76 (EDEKKAIEDTSAEKTAQTEEKKTESKDKEQA) shows a compositional bias: basic and acidic residues.

Belongs to the TatA/E family. The Tat system comprises two distinct complexes: a TatABC complex, containing multiple copies of TatA, TatB and TatC subunits, and a separate TatA complex, containing only TatA subunits. Substrates initially bind to the TatABC complex, which probably triggers association of the separate TatA complex to form the active translocon.

It is found in the cell inner membrane. In terms of biological role, part of the twin-arginine translocation (Tat) system that transports large folded proteins containing a characteristic twin-arginine motif in their signal peptide across membranes. TatA could form the protein-conducting channel of the Tat system. This Shewanella loihica (strain ATCC BAA-1088 / PV-4) protein is Sec-independent protein translocase protein TatA.